The chain runs to 155 residues: Small ribosomal subunit protein uS7cz/uS7cy (155 aa).

This sequence belongs to the universal ribosomal protein uS7 family. Part of the 30S ribosomal subunit.

The protein resides in the plastid. Its function is as follows. One of the primary rRNA binding proteins, it binds directly to 16S rRNA where it nucleates assembly of the head domain of the 30S subunit. This chain is Small ribosomal subunit protein uS7cz/uS7cy (rps7-A), found in Epifagus virginiana (Beechdrops).